The chain runs to 467 residues: Phosphomethylpyrimidine synthase (467 aa).

Residues asparagine 80, methionine 109, tyrosine 139, histidine 175, serine 195–glycine 197, aspartate 236–arginine 239, and glutamate 275 each bind substrate. Residue histidine 279 participates in Zn(2+) binding. Tyrosine 302 contributes to the substrate binding site. A Zn(2+)-binding site is contributed by histidine 343. The [4Fe-4S] cluster site is built by cysteine 423, cysteine 426, and cysteine 431.

The protein belongs to the ThiC family. The cofactor is [4Fe-4S] cluster.

It carries out the reaction 5-amino-1-(5-phospho-beta-D-ribosyl)imidazole + S-adenosyl-L-methionine = 4-amino-2-methyl-5-(phosphooxymethyl)pyrimidine + CO + 5'-deoxyadenosine + formate + L-methionine + 3 H(+). It functions in the pathway cofactor biosynthesis; thiamine diphosphate biosynthesis. In terms of biological role, catalyzes the synthesis of the hydroxymethylpyrimidine phosphate (HMP-P) moiety of thiamine from aminoimidazole ribotide (AIR) in a radical S-adenosyl-L-methionine (SAM)-dependent reaction. This is Phosphomethylpyrimidine synthase from Synechococcus sp. (strain WH7803).